Reading from the N-terminus, the 385-residue chain is Glycine/sarcosine/betaine reductase complex component C subunit alpha (385 aa).

The active site involves cysteine 359.

In terms of assembly, heterooctamer of four alpha and four beta subunits. Component of the glycine, sarcosine and betaine reductase complexes, together with proteins A and B.

The enzyme catalyses acetyl phosphate + [thioredoxin]-disulfide + NH4(+) + H2O = [thioredoxin]-dithiol + glycine + phosphate + H(+). It catalyses the reaction acetyl phosphate + methylamine + [thioredoxin]-disulfide + H2O = sarcosine + [thioredoxin]-dithiol + phosphate + H(+). It carries out the reaction acetyl phosphate + trimethylamine + [thioredoxin]-disulfide + H2O = glycine betaine + [thioredoxin]-dithiol + phosphate + H(+). Functionally, in the first step of glycine, betaine and sarcosine reductases, the substrate is bound to component PB via a Schiff base intermediate. Then the PB-activated substrate is nucleophilically attacked by the selenol anion of component PA to transform it to a carboxymethylated selenoether and the respective amine. By action of component PC, acetyl phosphate is formed, leaving component PA in its oxidized state. Finally component PA becomes reduced by the thioredoxin system to start a new catalytic cycle of reductive deamination. This Peptoclostridium acidaminophilum (Eubacterium acidaminophilum) protein is Glycine/sarcosine/betaine reductase complex component C subunit alpha (grdD).